The sequence spans 533 residues: MGETKYIFVTGGVASSLGKGIISSSIGKLLQARGYKVTIQKFDPYINIDPGTLNPYEHGECYVTVDGHEADLDLGHYERFLGIQTTKANNITTGRIYKSVIDKERRGDYLGKTIQVIPHITDEIKRNVKLLGNKYKFDFVITEIGGTVGDIESLPYLESIRQLKWELGQNALCVHLTYVPFLSAAQELKTKPTQHSVKELQSLGVQPDILVLRTEHDLNTNLRKKVALFCNVAENAVVQSIDASTIYEVPLLMQEQGLDETILQKMGLPVGERPPLGPWKDFLNRRANATETVTIAMVGKYVELQDAYKSILESLSQAATYNDRKVKIEYVSSEHLTPDNVDEQLGHVNGVVICPGFGSRGIEGKFVAAKYTREHNIPTFGICLGMQCMAIEFARNVLGYADANSIEMDEKTKHNVIDIMEEQKAITNMGGTMRLGAYECVLKKDSKVYEAYKEEHIQERHRHRYEFNNDYRKQFEEAGMKCVGINPESDLVEIVEIPTLKWYIGTQFHPEYSSTVLHPHPLFVSFIKAAIDK.

Residues 1-268 form an amidoligase domain region; it reads MGETKYIFVT…DETILQKMGL (268 aa). Position 15 (serine 15) interacts with CTP. Position 15 (serine 15) interacts with UTP. 16-21 serves as a coordination point for ATP; sequence SLGKGI. An L-glutamine-binding site is contributed by tyrosine 56. Aspartate 73 provides a ligand contact to ATP. Positions 73 and 143 each coordinate Mg(2+). CTP is bound by residues 150–152, 189–194, and lysine 225; these read DIE and KTKPTQ. UTP is bound by residues 189-194 and lysine 225; that span reads KTKPTQ. In terms of domain architecture, Glutamine amidotransferase type-1 spans 301–533; sequence YVELQDAYKS…VSFIKAAIDK (233 aa). Glycine 356 is an L-glutamine binding site. Cysteine 383 functions as the Nucleophile; for glutamine hydrolysis in the catalytic mechanism. L-glutamine-binding positions include 384–387, glutamate 407, and arginine 464; that span reads LGMQ. Residues histidine 509 and glutamate 511 contribute to the active site.

Belongs to the CTP synthase family. In terms of assembly, homotetramer.

The catalysed reaction is UTP + L-glutamine + ATP + H2O = CTP + L-glutamate + ADP + phosphate + 2 H(+). It catalyses the reaction L-glutamine + H2O = L-glutamate + NH4(+). The enzyme catalyses UTP + NH4(+) + ATP = CTP + ADP + phosphate + 2 H(+). The protein operates within pyrimidine metabolism; CTP biosynthesis via de novo pathway; CTP from UDP: step 2/2. Its activity is regulated as follows. Allosterically activated by GTP, when glutamine is the substrate; GTP has no effect on the reaction when ammonia is the substrate. The allosteric effector GTP functions by stabilizing the protein conformation that binds the tetrahedral intermediate(s) formed during glutamine hydrolysis. Inhibited by the product CTP, via allosteric rather than competitive inhibition. Catalyzes the ATP-dependent amination of UTP to CTP with either L-glutamine or ammonia as the source of nitrogen. Regulates intracellular CTP levels through interactions with the four ribonucleotide triphosphates. This chain is CTP synthase, found in Bacteroides fragilis (strain YCH46).